We begin with the raw amino-acid sequence, 99 residues long: Nucleoid-associated protein EbfC (99 aa).

Belongs to the YbaB/EbfC family. As to quaternary structure, homodimer.

It is found in the cytoplasm. Its subcellular location is the nucleoid. Functionally, binds to DNA and alters its conformation. May be involved in regulation of gene expression, nucleoid organization and DNA protection. The polypeptide is Nucleoid-associated protein EbfC (Borreliella afzelii (strain PKo) (Borrelia afzelii)).